The chain runs to 83 residues: Conotoxin MiEr92 (83 aa).

Positions 1-22 (MKLTCVLIVIMLFLTVCPLITA) are cleaved as a signal peptide. Residues 23–49 (DHSRDKQEHPAMRLKDRIRYLRRGKLT) constitute a propeptide that is removed on maturation. Disulfide bonds link Cys-52/Cys-67, Cys-59/Cys-72, and Cys-66/Cys-81.

Belongs to the conotoxin O1 superfamily. Expressed by the venom duct.

Its subcellular location is the secreted. In Conus miles (Soldier cone), this protein is Conotoxin MiEr92.